The primary structure comprises 195 residues: Small ribosomal subunit protein uS4 (195 aa).

Positions 88-150 constitute an S4 RNA-binding domain; the sequence is RRLENVVYRL…SKNVELIKLA (63 aa).

This sequence belongs to the universal ribosomal protein uS4 family. Part of the 30S ribosomal subunit. Contacts protein S5. The interaction surface between S4 and S5 is involved in control of translational fidelity.

Its function is as follows. One of the primary rRNA binding proteins, it binds directly to 16S rRNA where it nucleates assembly of the body of the 30S subunit. Functionally, with S5 and S12 plays an important role in translational accuracy. This is Small ribosomal subunit protein uS4 from Fusobacterium nucleatum subsp. nucleatum (strain ATCC 25586 / DSM 15643 / BCRC 10681 / CIP 101130 / JCM 8532 / KCTC 2640 / LMG 13131 / VPI 4355).